Here is a 137-residue protein sequence, read N- to C-terminus: Cellular retinoic acid-binding protein 1 (137 aa).

A Nuclear localization signal motif is present at residues 21–31; it reads KALGVNAMLRK. All-trans-retinoate is bound at residue 132–134; the sequence is RIY.

Belongs to the calycin superfamily. Fatty-acid binding protein (FABP) family.

Its subcellular location is the cytoplasm. Functionally, cytosolic CRABPs may regulate the access of retinoic acid to the nuclear retinoic acid receptors. This chain is Cellular retinoic acid-binding protein 1 (Crabp1), found in Mus musculus (Mouse).